Consider the following 310-residue polypeptide: Acetyl-coenzyme A carboxylase carboxyl transferase subunit beta (310 aa).

Residues 27–296 enclose the CoA carboxyltransferase N-terminal domain; sequence LWRKCPNCEA…QDRDAEPDDT (270 aa). Zn(2+) contacts are provided by C31, C34, C50, and C53. The C4-type zinc finger occupies 31-53; sequence CPNCEAVLYLPELERHQSVCPKC. A disordered region spans residues 282-310; it reads THQPHQDRDAEPDDTASQSTLDEFSQADH.

The protein belongs to the AccD/PCCB family. In terms of assembly, acetyl-CoA carboxylase is a heterohexamer composed of biotin carboxyl carrier protein (AccB), biotin carboxylase (AccC) and two subunits each of ACCase subunit alpha (AccA) and ACCase subunit beta (AccD). Zn(2+) serves as cofactor.

The protein resides in the cytoplasm. The enzyme catalyses N(6)-carboxybiotinyl-L-lysyl-[protein] + acetyl-CoA = N(6)-biotinyl-L-lysyl-[protein] + malonyl-CoA. The protein operates within lipid metabolism; malonyl-CoA biosynthesis; malonyl-CoA from acetyl-CoA: step 1/1. Component of the acetyl coenzyme A carboxylase (ACC) complex. Biotin carboxylase (BC) catalyzes the carboxylation of biotin on its carrier protein (BCCP) and then the CO(2) group is transferred by the transcarboxylase to acetyl-CoA to form malonyl-CoA. This is Acetyl-coenzyme A carboxylase carboxyl transferase subunit beta from Chromohalobacter salexigens (strain ATCC BAA-138 / DSM 3043 / CIP 106854 / NCIMB 13768 / 1H11).